We begin with the raw amino-acid sequence, 949 residues long: MARHETSFPEILDVAALRARCDFIASAHAEQREPMRRALLAAFKEANVAGRAKARELLAADGAGIKCAERISWLQDQLITLLHDFVLNQVFDAAKAPEASRIAVTAVGGYGRGTLAPGSDIDLLFLLPAKKAVWAEPAIEFMLYILWDLGFKVGHATRTIEECIRLSRADMTIRTAILECRYVCGSAALANELETRFDHEIVRNTGPEFIAAKLAERDERHRKAGDTRYLVEPNVKEGKGGLRDLHTLFWISKYFYRVKDSADLVKLGVLSKQEYKLFQKAEDFLWAVRCHMHFLTGKAEERLSFDIQREIAEALGYHDHPGLSAVERFMKHYFLVAKDVGDLTRIFCSALEDQQAKDTPGITGVISRFRNRVRKIAGTLDFVDDGGRIALAGTDVFKRDPVNLMRLFHIADINGLEFHPAALKQVTRSLGLITPHLRENEEANRLFLSILTSRRNPELILRRMNEAGVLGRFIPEFGKIVSMMQFNMYHHYTVDEHLLRSVDVLSRIERGLEEEAHPLTAMLMPGIEDREALYVAVLLHDIAKGRPEDHSVAGAKVARKLCPRFRLTPKQTEMVVWLVEEHLTMSMVAQTRDLNDRKTIVDFAERVQSLERLKMLLILTVCDIRAVGPGVWNGWKGQLLRTLYYETELLLSGGFSELSRKERAKHAAHMLEEALADWPKKERQAYVRLHYQPYLLTVALEEQVRHAGFIREADRAGRTLATMVRTHDFHAITEITVLSPDHPRLLTVIAGACAAAGANIVGAQIHTTSDGRALDTILVNREFSVAEDETRRAASIGKLIEDVLSGRKRLPEVIASRTRVKKRSRAFTVTPEVTISNTLSNKFTVIEVEGLDRTGLLSEVTAVLSDLSLDIASAHITTFGEKVIDTFYVTDLVGSKITSENRQMNIAARLKAVLAGEVDEARERMPSGIIAPTPVSRVPHGSKTTKAET.

The tract at residues 1 to 377 (MARHETSFPE…RFRNRVRKIA (377 aa)) is uridylyltransferase. The tract at residues 378–733 (GTLDFVDDGG…VRTHDFHAIT (356 aa)) is uridylyl-removing. Residues 494–610 (VDEHLLRSVD…VDFAERVQSL (117 aa)) enclose the HD domain. 2 consecutive ACT domains span residues 734–816 (EITV…VIAS) and 845–926 (VIEV…ERMP). Residues 926-949 (PSGIIAPTPVSRVPHGSKTTKAET) are disordered.

The protein belongs to the GlnD family. Requires Mg(2+) as cofactor.

The catalysed reaction is [protein-PII]-L-tyrosine + UTP = [protein-PII]-uridylyl-L-tyrosine + diphosphate. It carries out the reaction [protein-PII]-uridylyl-L-tyrosine + H2O = [protein-PII]-L-tyrosine + UMP + H(+). Its activity is regulated as follows. Uridylyltransferase (UTase) activity is inhibited by glutamine, while glutamine activates uridylyl-removing (UR) activity. In terms of biological role, modifies, by uridylylation and deuridylylation, the PII regulatory proteins (GlnB and homologs), in response to the nitrogen status of the cell that GlnD senses through the glutamine level. Under low glutamine levels, catalyzes the conversion of the PII proteins and UTP to PII-UMP and PPi, while under higher glutamine levels, GlnD hydrolyzes PII-UMP to PII and UMP (deuridylylation). Thus, controls uridylylation state and activity of the PII proteins, and plays an important role in the regulation of nitrogen fixation and metabolism. This Rhizobium meliloti (strain 1021) (Ensifer meliloti) protein is Bifunctional uridylyltransferase/uridylyl-removing enzyme.